Here is a 207-residue protein sequence, read N- to C-terminus: Shikimate kinase (207 aa).

32–37 (GVGKST) serves as a coordination point for ATP. Ser36 lines the Mg(2+) pocket. Positions 54, 78, and 100 each coordinate substrate. An ATP-binding site is contributed by Arg138. Position 157 (Arg157) interacts with substrate.

Belongs to the shikimate kinase family. As to quaternary structure, monomer. Mg(2+) serves as cofactor.

It localises to the cytoplasm. It carries out the reaction shikimate + ATP = 3-phosphoshikimate + ADP + H(+). Its pathway is metabolic intermediate biosynthesis; chorismate biosynthesis; chorismate from D-erythrose 4-phosphate and phosphoenolpyruvate: step 5/7. In terms of biological role, catalyzes the specific phosphorylation of the 3-hydroxyl group of shikimic acid using ATP as a cosubstrate. This is Shikimate kinase from Bradyrhizobium diazoefficiens (strain JCM 10833 / BCRC 13528 / IAM 13628 / NBRC 14792 / USDA 110).